The following is a 458-amino-acid chain: ATP synthase subunit beta (458 aa).

148-155 (GGAGVGKT) is a binding site for ATP.

It belongs to the ATPase alpha/beta chains family. F-type ATPases have 2 components, CF(1) - the catalytic core - and CF(0) - the membrane proton channel. CF(1) has five subunits: alpha(3), beta(3), gamma(1), delta(1), epsilon(1). CF(0) has three main subunits: a(1), b(2) and c(9-12). The alpha and beta chains form an alternating ring which encloses part of the gamma chain. CF(1) is attached to CF(0) by a central stalk formed by the gamma and epsilon chains, while a peripheral stalk is formed by the delta and b chains.

It localises to the cell inner membrane. It carries out the reaction ATP + H2O + 4 H(+)(in) = ADP + phosphate + 5 H(+)(out). Its function is as follows. Produces ATP from ADP in the presence of a proton gradient across the membrane. The catalytic sites are hosted primarily by the beta subunits. The protein is ATP synthase subunit beta of Shewanella halifaxensis (strain HAW-EB4).